Here is an 80-residue protein sequence, read N- to C-terminus: MATKKPENMSFEATIEELDNLVDQLENGDLALDDALKKFERGIALARASQAKLTEAEQRVSILLSDSDDAPLSDFSTLAE.

Belongs to the XseB family. Heterooligomer composed of large and small subunits.

It is found in the cytoplasm. The enzyme catalyses Exonucleolytic cleavage in either 5'- to 3'- or 3'- to 5'-direction to yield nucleoside 5'-phosphates.. Its function is as follows. Bidirectionally degrades single-stranded DNA into large acid-insoluble oligonucleotides, which are then degraded further into small acid-soluble oligonucleotides. The polypeptide is Exodeoxyribonuclease 7 small subunit (Vibrio vulnificus (strain CMCP6)).